The chain runs to 567 residues: Septation ring formation regulator EzrA (567 aa).

At 1 to 2 (MG) the chain is on the extracellular side. Residues 3-21 (MAWIVLLLGAGAIIYNHVY) form a helical membrane-spanning segment. Over 22 to 567 (RKRMYREIDR…LWQEDNSREQ (546 aa)) the chain is Cytoplasmic. Coiled-coil stretches lie at residues 98–159 (YRQA…AYRY) and 251–497 (HMER…IEQA).

The protein belongs to the EzrA family.

The protein resides in the cell membrane. In terms of biological role, negative regulator of FtsZ ring formation; modulates the frequency and position of FtsZ ring formation. Inhibits FtsZ ring formation at polar sites. Interacts either with FtsZ or with one of its binding partners to promote depolymerization. This is Septation ring formation regulator EzrA from Geobacillus kaustophilus (strain HTA426).